The chain runs to 166 residues: MNAIYPGSFDPITFGHLDIIERGCRLFDQVYVAVLRNPNKQPMFSVQERLEQIAKAIAHLPNAQVDSFEGLTVNYARQRQAGAILRGLRVLSDFELELQMANTNKTLASDLETVFLTTSTEYSFLSSSLVKEVARFGGNVEHFVPSHVAAALYDQFHPVVERDRLT.

Serine 8 is a binding site for substrate. Residues 8-9 and histidine 16 each bind ATP; that span reads SF. Substrate-binding residues include lysine 40, threonine 72, and arginine 86. ATP-binding positions include 87 to 89, glutamate 97, and 122 to 128; these read GLR and YSFLSSS.

Belongs to the bacterial CoaD family. Homohexamer. Mg(2+) is required as a cofactor.

It is found in the cytoplasm. The catalysed reaction is (R)-4'-phosphopantetheine + ATP + H(+) = 3'-dephospho-CoA + diphosphate. It functions in the pathway cofactor biosynthesis; coenzyme A biosynthesis; CoA from (R)-pantothenate: step 4/5. Its function is as follows. Reversibly transfers an adenylyl group from ATP to 4'-phosphopantetheine, yielding dephospho-CoA (dPCoA) and pyrophosphate. This Synechococcus elongatus (strain ATCC 33912 / PCC 7942 / FACHB-805) (Anacystis nidulans R2) protein is Phosphopantetheine adenylyltransferase.